The primary structure comprises 121 residues: uncharacterized protein (121 aa).

Disordered stretches follow at residues 38-76 (NQMA…KYQQ) and 91-121 (SVLR…KQEN). Positions 43–63 (KRNKQSKKPKQTSKGVKKSSK) are enriched in basic residues. A compositionally biased stretch (low complexity) spans 64–76 (QNKNSSKNNKYQQ).

This is an uncharacterized protein from Schizosaccharomyces pombe (strain 972 / ATCC 24843) (Fission yeast).